Reading from the N-terminus, the 106-residue chain is ATP-dependent Clp protease adapter protein ClpS (106 aa).

Basic and acidic residues predominate over residues 1-13 (MPRNTSHEHDHGL). The tract at residues 1 to 20 (MPRNTSHEHDHGLMVEASKP) is disordered.

It belongs to the ClpS family. Binds to the N-terminal domain of the chaperone ClpA.

Functionally, involved in the modulation of the specificity of the ClpAP-mediated ATP-dependent protein degradation. This Xanthomonas axonopodis pv. citri (strain 306) protein is ATP-dependent Clp protease adapter protein ClpS.